Reading from the N-terminus, the 66-residue chain is Large ribosomal subunit protein bL32 (66 aa).

The protein belongs to the bacterial ribosomal protein bL32 family.

The protein is Large ribosomal subunit protein bL32 of Rickettsia canadensis (strain McKiel).